We begin with the raw amino-acid sequence, 247 residues long: Segregation and condensation protein A (247 aa).

Belongs to the ScpA family. Component of a cohesin-like complex composed of ScpA, ScpB and the Smc homodimer, in which ScpA and ScpB bind to the head domain of Smc. The presence of the three proteins is required for the association of the complex with DNA.

It is found in the cytoplasm. Participates in chromosomal partition during cell division. May act via the formation of a condensin-like complex containing Smc and ScpB that pull DNA away from mid-cell into both cell halves. This chain is Segregation and condensation protein A, found in Caldanaerobacter subterraneus subsp. tengcongensis (strain DSM 15242 / JCM 11007 / NBRC 100824 / MB4) (Thermoanaerobacter tengcongensis).